We begin with the raw amino-acid sequence, 343 residues long: Dihydroorotase (343 aa).

Residues H13 and H15 each contribute to the Zn(2+) site. Residues 15 to 17 (HLR) and N41 each bind substrate. Zn(2+)-binding residues include K99, H136, and H174. Position 99 is an N6-carboxylysine (K99). H136 lines the substrate pocket. Residue L219 coordinates substrate. D247 serves as a coordination point for Zn(2+). D247 is a catalytic residue. Positions 251 and 263 each coordinate substrate.

It belongs to the metallo-dependent hydrolases superfamily. DHOase family. Class II DHOase subfamily. As to quaternary structure, homodimer. It depends on Zn(2+) as a cofactor.

It catalyses the reaction (S)-dihydroorotate + H2O = N-carbamoyl-L-aspartate + H(+). It functions in the pathway pyrimidine metabolism; UMP biosynthesis via de novo pathway; (S)-dihydroorotate from bicarbonate: step 3/3. Catalyzes the reversible cyclization of carbamoyl aspartate to dihydroorotate. In Shewanella baltica (strain OS195), this protein is Dihydroorotase.